Consider the following 433-residue polypeptide: 5-methylthioadenosine/S-adenosylhomocysteine deaminase (433 aa).

Zn(2+) is bound by residues His67 and His69. Residues Glu96, Arg148, Arg158, and His186 each coordinate substrate. Residue His213 coordinates Zn(2+). Substrate contacts are provided by Glu216 and Asp301. Asp301 is a Zn(2+) binding site.

It belongs to the metallo-dependent hydrolases superfamily. MTA/SAH deaminase family. Zn(2+) is required as a cofactor.

It carries out the reaction S-adenosyl-L-homocysteine + H2O + H(+) = S-inosyl-L-homocysteine + NH4(+). The catalysed reaction is S-methyl-5'-thioadenosine + H2O + H(+) = S-methyl-5'-thioinosine + NH4(+). Its function is as follows. Catalyzes the deamination of 5-methylthioadenosine and S-adenosyl-L-homocysteine into 5-methylthioinosine and S-inosyl-L-homocysteine, respectively. Is also able to deaminate adenosine. The polypeptide is 5-methylthioadenosine/S-adenosylhomocysteine deaminase (Pelotomaculum thermopropionicum (strain DSM 13744 / JCM 10971 / SI)).